The primary structure comprises 333 residues: Anthranilate phosphoribosyltransferase (333 aa).

5-phospho-alpha-D-ribose 1-diphosphate-binding positions include Gly81, 84–85 (GD), Thr89, 91–94 (NIST), 109–117 (KHGNRSVSS), and Ala121. Gly81 serves as a coordination point for anthranilate. A Mg(2+)-binding site is contributed by Ser93. Asn112 contributes to the anthranilate binding site. Arg167 serves as a coordination point for anthranilate. Mg(2+) is bound by residues Asp225 and Glu226.

It belongs to the anthranilate phosphoribosyltransferase family. In terms of assembly, homodimer. It depends on Mg(2+) as a cofactor.

The enzyme catalyses N-(5-phospho-beta-D-ribosyl)anthranilate + diphosphate = 5-phospho-alpha-D-ribose 1-diphosphate + anthranilate. Its pathway is amino-acid biosynthesis; L-tryptophan biosynthesis; L-tryptophan from chorismate: step 2/5. Catalyzes the transfer of the phosphoribosyl group of 5-phosphorylribose-1-pyrophosphate (PRPP) to anthranilate to yield N-(5'-phosphoribosyl)-anthranilate (PRA). The chain is Anthranilate phosphoribosyltransferase from Actinobacillus succinogenes (strain ATCC 55618 / DSM 22257 / CCUG 43843 / 130Z).